Here is a 468-residue protein sequence, read N- to C-terminus: MDTADHHQRYGRVARIRGSVVDVRFERHLPPIHTILETGKDREVKIEVLTQLDDRHIRGIALTGTEGLCRAMAVLDTGMPLRAPVGKQILSRMFDVFGRPIDRGAPPPDVEWRGVHRMPPPLGRRSTRSEVFETGIKIIDLLSPLERGGKAGLFGGAGVGKTVLLTEMIHNMVHRHHGVSIFCGIGERCREGEELYRDMRDAGVLDSMVMVFGQMNEPPGSRFRVGLAALTMAEYFRDDQHEDVLLLIDNIFRFIQAGSEISGMMGQMPSRLGYQPTMGTELSQLEERIANTGTGAITSIQAVYVPADDFTDPAAVHTFSHLSASLTLSRKRAGEGFFPAIDPLQSGSKMTAPSIIGRRHYDLSRQIRRVLAQYSELKDIIAMLGLEQLSAEDRKLVARARRLERFLTQPFFTTEQFTGIEGRMVSLNDTIDGCERILRDEFADYPESSLYMIGTVAEARKNNAVHAP.

ATP is bound at residue Gly155–Thr162.

The protein belongs to the ATPase alpha/beta chains family. As to quaternary structure, F-type ATPases have 2 components, CF(1) - the catalytic core - and CF(0) - the membrane proton channel. CF(1) has five subunits: alpha(3), beta(3), gamma(1), delta(1), epsilon(1). CF(0) has four main subunits: a(1), b(1), b'(1) and c(9-12).

The protein localises to the cell inner membrane. It catalyses the reaction ATP + H2O + 4 H(+)(in) = ADP + phosphate + 5 H(+)(out). Produces ATP from ADP in the presence of a proton gradient across the membrane. The catalytic sites are hosted primarily by the beta subunits. The polypeptide is ATP synthase subunit beta 2 (Chlorobium luteolum (strain DSM 273 / BCRC 81028 / 2530) (Pelodictyon luteolum)).